The chain runs to 94 residues: Putative pterin-4-alpha-carbinolamine dehydratase (94 aa).

The protein belongs to the pterin-4-alpha-carbinolamine dehydratase family.

The catalysed reaction is (4aS,6R)-4a-hydroxy-L-erythro-5,6,7,8-tetrahydrobiopterin = (6R)-L-erythro-6,7-dihydrobiopterin + H2O. The polypeptide is Putative pterin-4-alpha-carbinolamine dehydratase (Koribacter versatilis (strain Ellin345)).